The chain runs to 84 residues: Cell division topological specificity factor (84 aa).

Belongs to the MinE family.

Prevents the cell division inhibition by proteins MinC and MinD at internal division sites while permitting inhibition at polar sites. This ensures cell division at the proper site by restricting the formation of a division septum at the midpoint of the long axis of the cell. This chain is Cell division topological specificity factor, found in Pseudomonas putida (strain W619).